We begin with the raw amino-acid sequence, 483 residues long: 3-isopropylmalate dehydratase large subunit (483 aa).

Residues Cys352, Cys412, and Cys415 each coordinate [4Fe-4S] cluster.

Belongs to the aconitase/IPM isomerase family. LeuC type 1 subfamily. Heterodimer of LeuC and LeuD. [4Fe-4S] cluster is required as a cofactor.

It carries out the reaction (2R,3S)-3-isopropylmalate = (2S)-2-isopropylmalate. Its pathway is amino-acid biosynthesis; L-leucine biosynthesis; L-leucine from 3-methyl-2-oxobutanoate: step 2/4. Its function is as follows. Catalyzes the isomerization between 2-isopropylmalate and 3-isopropylmalate, via the formation of 2-isopropylmaleate. The polypeptide is 3-isopropylmalate dehydratase large subunit (Paenarthrobacter aurescens (strain TC1)).